The following is a 4490-amino-acid chain: Dynein axonemal heavy chain 8 (4490 aa).

Ser-674 bears the Phosphoserine mark. 4 AAA regions span residues 1808–2030 (YQNE…VLRT), 2090–2309 (NAVA…KLNL), 2416–2669 (YYPT…IWQG), and 2780–3034 (QFNE…YRRR). ATP-binding positions include 1846 to 1853 (GPAGTGKT) and 2128 to 2135 (GPSGSGKT). The interval 3049–3346 (YKNIYAEKVK…MDLLNDADTC (298 aa)) is stalk. 3 coiled-coil regions span residues 3072–3164 (DKLM…ALNT), 3290–3354 (LKAN…QAAS), and 3594–3630 (RRVI…DNLL). AAA stretches follow at residues 3432–3662 (LVDP…EVSE) and 3877–4091 (ARKY…FIQN).

Belongs to the dynein heavy chain family. Consists of at least two heavy chains and a number of intermediate and light chains. As to expression, expressed in spermatozoa (at protein level). Not detected in airway epithelial cells (at protein level).

It localises to the cytoplasm. The protein resides in the cytoskeleton. It is found in the flagellum axoneme. Functionally, force generating protein component of the outer dynein arms (ODAs) in the sperm flagellum. Produces force towards the minus ends of microtubules. Dynein has ATPase activity; the force-producing power stroke is thought to occur on release of ADP. Involved in sperm motility; implicated in sperm flagellar assembly. The protein is Dynein axonemal heavy chain 8 of Homo sapiens (Human).